We begin with the raw amino-acid sequence, 140 residues long: MLKTISPLISPTLLKVLAEMGHGDEIIFSDAHFPAHSLGPQVIRADGLSVSDLLRAIIPLFELDSYAPPLVMMAAVEGDTLDPNVEARYRDALSLEAPCPDIVRIDRYAFYERAQKAFAIVITGECAKYGNILLKKGVTP.

His22 functions as the Proton donor in the catalytic mechanism. Substrate-binding positions include Asp30, Arg107, and 129–131 (YGN).

Belongs to the RbsD / FucU family. FucU mutarotase subfamily. As to quaternary structure, homodecamer.

It localises to the cytoplasm. The enzyme catalyses alpha-L-fucose = beta-L-fucose. Its pathway is carbohydrate metabolism; L-fucose metabolism. Involved in the anomeric conversion of L-fucose. The polypeptide is L-fucose mutarotase (Salmonella typhimurium (strain LT2 / SGSC1412 / ATCC 700720)).